Consider the following 111-residue polypeptide: Ribosome-binding factor A (111 aa).

It belongs to the RbfA family. Monomer. Binds 30S ribosomal subunits, but not 50S ribosomal subunits or 70S ribosomes.

Its subcellular location is the cytoplasm. Its function is as follows. One of several proteins that assist in the late maturation steps of the functional core of the 30S ribosomal subunit. Associates with free 30S ribosomal subunits (but not with 30S subunits that are part of 70S ribosomes or polysomes). Required for efficient processing of 16S rRNA. May interact with the 5'-terminal helix region of 16S rRNA. The sequence is that of Ribosome-binding factor A from Helicobacter acinonychis (strain Sheeba).